Consider the following 339-residue polypeptide: Dihydroorotate dehydrogenase (quinone) (339 aa).

FMN-binding positions include 62–66 (AGMDK) and threonine 86. Lysine 66 is a binding site for substrate. A substrate-binding site is contributed by 111–115 (NRMGF). Residues asparagine 139 and asparagine 172 each coordinate FMN. Asparagine 172 lines the substrate pocket. The Nucleophile role is filled by serine 175. Asparagine 177 provides a ligand contact to substrate. Lysine 217 and threonine 245 together coordinate FMN. 246–247 (NT) contacts substrate. FMN is bound by residues glycine 268, glycine 297, and 318-319 (YS).

The protein belongs to the dihydroorotate dehydrogenase family. Type 2 subfamily. Monomer. It depends on FMN as a cofactor.

The protein resides in the cell membrane. The catalysed reaction is (S)-dihydroorotate + a quinone = orotate + a quinol. The protein operates within pyrimidine metabolism; UMP biosynthesis via de novo pathway; orotate from (S)-dihydroorotate (quinone route): step 1/1. Catalyzes the conversion of dihydroorotate to orotate with quinone as electron acceptor. This is Dihydroorotate dehydrogenase (quinone) from Shewanella sp. (strain ANA-3).